We begin with the raw amino-acid sequence, 324 residues long: o-succinylbenzoate synthase (324 aa).

The Proton donor role is filled by K135. 3 residues coordinate Mg(2+): D163, E192, and D215. K237 acts as the Proton acceptor in catalysis.

This sequence belongs to the mandelate racemase/muconate lactonizing enzyme family. MenC type 1 subfamily. The cofactor is a divalent metal cation.

It carries out the reaction (1R,6R)-6-hydroxy-2-succinyl-cyclohexa-2,4-diene-1-carboxylate = 2-succinylbenzoate + H2O. It functions in the pathway quinol/quinone metabolism; 1,4-dihydroxy-2-naphthoate biosynthesis; 1,4-dihydroxy-2-naphthoate from chorismate: step 4/7. It participates in quinol/quinone metabolism; menaquinone biosynthesis. Converts 2-succinyl-6-hydroxy-2,4-cyclohexadiene-1-carboxylate (SHCHC) to 2-succinylbenzoate (OSB). This chain is o-succinylbenzoate synthase, found in Aliivibrio fischeri (strain MJ11) (Vibrio fischeri).